Consider the following 477-residue polypeptide: Pyruvate kinase (477 aa).

Arg-34 contacts substrate. Residues Asn-36, Asp-64, and Thr-65 each contribute to the K(+) site. Residue 36–39 coordinates ATP; that stretch reads NTAH. ATP is bound by residues Arg-71 and Lys-150. Glu-216 serves as a coordination point for Mg(2+). 3 residues coordinate substrate: Gly-239, Asp-240, and Thr-272. Asp-240 provides a ligand contact to Mg(2+).

It belongs to the pyruvate kinase family. As to quaternary structure, homotetramer. Requires Mg(2+) as cofactor. K(+) serves as cofactor.

The enzyme catalyses pyruvate + ATP = phosphoenolpyruvate + ADP + H(+). It functions in the pathway carbohydrate degradation; glycolysis; pyruvate from D-glyceraldehyde 3-phosphate: step 5/5. The sequence is that of Pyruvate kinase (pyk) from Borreliella burgdorferi (strain ATCC 35210 / DSM 4680 / CIP 102532 / B31) (Borrelia burgdorferi).